We begin with the raw amino-acid sequence, 365 residues long: Oligosaccharides import ATP-binding protein MsmX (365 aa).

Positions 4 to 235 (LRMEHIYKFY…PENVFVGGFI (232 aa)) constitute an ABC transporter domain. Position 37-44 (37-44 (GPSGCGKS)) interacts with ATP.

It belongs to the ABC transporter superfamily. As to quaternary structure, the complex involved in maltodextrin import is composed of two ATP-binding proteins (MsmX), two transmembrane proteins (MdxF and MdxG) and a solute-binding protein (MdxE). The complex involved in arabinooligosaccharides uptake is composed of two ATP-binding proteins (MsmX), two transmembrane proteins (AraP and AraQ) and a solute-binding protein (AraN). The complex involved in galactooligosaccharides uptake is composed of two ATP-binding proteins (MsmX), two transmembrane proteins (GanP and GanQ) and a solute-binding protein (GanS). The complex involved in melibiose, raffinose and stachyose import is composed of two ATP-binding proteins (MsmX), two transmembrane proteins (MelC and MelD) and a solute-binding protein (MelE). The complex involved in polygalacturonan and rhamnogalacturonan type I uptake is probably composed of two ATP-binding proteins (MsmX), two transmembrane proteins (YtcP and YteP) and a solute-binding protein (YtcQ).

It localises to the cell membrane. Required to energize different ABC-type saccharide transporters. Part of the MdxEFG-MsmX ABC transporter complex involved in maltodextrin import, of the AraNPQ-MsmX complex involved in arabinooligosaccharides import, of the GanPQS-MsmX complex involved in galactooligosaccharides import, and of the MelEDC-MsmX complex involved in melibiose, raffinose and stachyose import. Is probably also part of the ABC transporter complex YtcQP-YteP-MsmX involved in polygalacturonan and rhamnogalacturonan type I import during pectin degradation. Responsible for energy coupling to the transport system. In Bacillus subtilis (strain 168), this protein is Oligosaccharides import ATP-binding protein MsmX (msmX).